Consider the following 72-residue polypeptide: Translation initiation factor IF-1 (72 aa).

The S1-like domain occupies 1-72; sequence MAKEEAIEVE…TRGRITYREK (72 aa).

This sequence belongs to the IF-1 family. In terms of assembly, component of the 30S ribosomal translation pre-initiation complex which assembles on the 30S ribosome in the order IF-2 and IF-3, IF-1 and N-formylmethionyl-tRNA(fMet); mRNA recruitment can occur at any time during PIC assembly.

It localises to the cytoplasm. One of the essential components for the initiation of protein synthesis. Stabilizes the binding of IF-2 and IF-3 on the 30S subunit to which N-formylmethionyl-tRNA(fMet) subsequently binds. Helps modulate mRNA selection, yielding the 30S pre-initiation complex (PIC). Upon addition of the 50S ribosomal subunit IF-1, IF-2 and IF-3 are released leaving the mature 70S translation initiation complex. In Syntrophotalea carbinolica (strain DSM 2380 / NBRC 103641 / GraBd1) (Pelobacter carbinolicus), this protein is Translation initiation factor IF-1.